We begin with the raw amino-acid sequence, 195 residues long: Protein GrpE (195 aa).

The protein belongs to the GrpE family. As to quaternary structure, homodimer.

The protein resides in the cytoplasm. In terms of biological role, participates actively in the response to hyperosmotic and heat shock by preventing the aggregation of stress-denatured proteins, in association with DnaK and GrpE. It is the nucleotide exchange factor for DnaK and may function as a thermosensor. Unfolded proteins bind initially to DnaJ; upon interaction with the DnaJ-bound protein, DnaK hydrolyzes its bound ATP, resulting in the formation of a stable complex. GrpE releases ADP from DnaK; ATP binding to DnaK triggers the release of the substrate protein, thus completing the reaction cycle. Several rounds of ATP-dependent interactions between DnaJ, DnaK and GrpE are required for fully efficient folding. The sequence is that of Protein GrpE from Francisella tularensis subsp. novicida (strain U112).